A 411-amino-acid polypeptide reads, in one-letter code: DSEFAELKIRGKIFKLPILKASIGEDVIDISRVSAEADCFTYDPGFMSTASCQSTITYIDGDKGILRHRGYDIKDLAEKSDFLEVAYLLIYGELPSGEQYNNFTKQVAHHSLVNERLHYLFQTFCSSSHPMAIMLAAVGSLSAFYPDLLNFKEADYELTAIRMIAKIPTIAAMSYKYSIGQPFIYPDNSLDFTENFLHMMFATPCTKYKVNPIIKNALNKIFILHADHEQNASTSTVRIAGSSGANPFACISTGIASLWGPAHGGANEVVINMLKEIGSSEYIPKYIAKAKDKNDPFRLMGFGHRIYKNYDPRAAVLKETCKEVLKELGQLDNNPLLQIAIELEAIALKDEYFIERKLYPNVDFYSGIIYKAMGIPSQMFTVLFAIARTVGWMAQWKEMHEDPEQKISRPR.

Active-site residues include histidine 304 and aspartate 363.

This sequence belongs to the citrate synthase family.

It catalyses the reaction oxaloacetate + acetyl-CoA + H2O = citrate + CoA + H(+). The protein operates within carbohydrate metabolism; tricarboxylic acid cycle; isocitrate from oxaloacetate: step 1/2. The protein is Citrate synthase (gltA) of Rickettsia massiliae.